The sequence spans 102 residues: uncharacterized protein (102 aa).

The tract at residues 1–41 (MAAPRQIAFYGKGGTGKPKRKPEPVTASKEDRCLGSPSKNK) is disordered.

The protein to the N-terminal of nitrogenase iron protein (NifH). Has lost the ATP-binding site.

This protein is either not expressed, expressed at low levels or rapidly degraded. This is an uncharacterized protein from Rhizobium meliloti (Ensifer meliloti).